A 29-amino-acid chain; its full sequence is Cytochrome b6-f complex subunit 8 (29 aa).

Residues 3–23 form a helical membrane-spanning segment; that stretch reads IVDIAWAALMVVFTFSLSLVV.

The protein belongs to the PetN family. In terms of assembly, the 4 large subunits of the cytochrome b6-f complex are cytochrome b6, subunit IV (17 kDa polypeptide, PetD), cytochrome f and the Rieske protein, while the 4 small subunits are PetG, PetL, PetM and PetN. The complex functions as a dimer.

It is found in the plastid. It localises to the chloroplast thylakoid membrane. Component of the cytochrome b6-f complex, which mediates electron transfer between photosystem II (PSII) and photosystem I (PSI), cyclic electron flow around PSI, and state transitions. The polypeptide is Cytochrome b6-f complex subunit 8 (Gnetum parvifolium (Small-leaved jointfir)).